A 361-amino-acid polypeptide reads, in one-letter code: Zinc transporter ZIP13 (361 aa).

Residues 1 to 6 lie on the Lumenal side of the membrane; the sequence is MPGCPC. A helical membrane pass occupies residues 7-27; that stretch reads PGCGMAGQRLLFLTVLALELL. Over 28–68 the chain is Cytoplasmic; that stretch reads ERAGGSQPALRSLGAAAACRLDSKESESWGALLSGERLDTW. A helical transmembrane segment spans residues 69-89; that stretch reads ICSLLGSLMVGLSGVFPLLVI. Residues 90 to 108 lie on the Lumenal side of the membrane; sequence PLEMGTMLQSEAGAWRLKQ. The chain crosses the membrane as a helical span at residues 109–129; the sequence is LLSFALGGLLGNVFLHLLPEA. The Cytoplasmic segment spans residues 130–150; that stretch reads WAYTCNISPGVEGQSLQRQQQ. Residues 151 to 171 traverse the membrane as a helical segment; it reads LGLWVIAGFLTFLALEKMFLN. Over 172 to 233 the chain is Lumenal; sequence CKEEDPSQAP…TIDNFTHGLA (62 aa). Residues 234–254 form a helical membrane-spanning segment; that stretch reads VAASFLVSKKIGLLTTMAILL. An XEXPHE-motif motif is present at residues 255 to 260; that stretch reads HEIPHE. Residues 255-276 lie on the Cytoplasmic side of the membrane; sequence HEIPHEVGDFAILLRAGFDRWT. Residues 277-297 traverse the membrane as a helical segment; the sequence is AAKLQFSTALGGLLGACFAIC. Over 298-307 the chain is Lumenal; it reads TQSPKGVEET. Residues 308–328 form a helical membrane-spanning segment; sequence VVWTLPFTSGGFLYVALVNVL. Residues 329–340 are Cytoplasmic-facing; sequence PDLLEEDDPWHL. Residues 341–361 form a helical membrane-spanning segment; it reads NPPLPTGTPCSRCCCSAPVSW.

The protein belongs to the ZIP transporter (TC 2.A.5) family. In terms of assembly, homodimer.

Its subcellular location is the golgi apparatus membrane. It localises to the cytoplasmic vesicle membrane. It is found in the endoplasmic reticulum membrane. It carries out the reaction Zn(2+)(in) = Zn(2+)(out). Its function is as follows. Functions as a zinc transporter transporting Zn(2+) from the Golgi apparatus to the cytosol and thus influences the zinc level at least in areas of the cytosol. May regulate beige adipocyte differentiation. In Rattus norvegicus (Rat), this protein is Zinc transporter ZIP13.